Reading from the N-terminus, the 78-residue chain is Antitoxin VapB27 (78 aa).

In terms of domain architecture, SpoVT-AbrB spans 1–45 (MKAVVDAAGRIVVPKPLREALGLQPGSTVEISRYGAGLHLIPTGR).

This sequence belongs to the VapB family. In terms of assembly, interacts with cognate toxin VapC27 and non-cognate toxins MazF6 and VapC40. Interaction with MazF6 and MazF9 partially neutralizes the toxins.

Functionally, antitoxin component of a type II toxin-antitoxin (TA) system. Cognate toxin is VapC27. Upon expression in E.coli partially counteracts the ribonuclease activity of non-cognate toxins MazF6 and MazF9. The protein is Antitoxin VapB27 (vapB27) of Mycobacterium tuberculosis (strain ATCC 25618 / H37Rv).